The sequence spans 94 residues: Co-chaperonin GroES (94 aa).

Belongs to the GroES chaperonin family. Heptamer of 7 subunits arranged in a ring. Interacts with the chaperonin GroEL.

Its subcellular location is the cytoplasm. In terms of biological role, together with the chaperonin GroEL, plays an essential role in assisting protein folding. The GroEL-GroES system forms a nano-cage that allows encapsulation of the non-native substrate proteins and provides a physical environment optimized to promote and accelerate protein folding. GroES binds to the apical surface of the GroEL ring, thereby capping the opening of the GroEL channel. This chain is Co-chaperonin GroES, found in Alkaliphilus metalliredigens (strain QYMF).